Consider the following 66-residue polypeptide: MVKKALIVILILLPFVQLALLPLVNRIEPIMFGLPFFHFWLLLWIIVTPLCSFGIYQMQKKDGGLE.

2 helical membrane-spanning segments follow: residues 5-25 (ALIVILILLPFVQLALLPLVN) and 30-50 (IMFGLPFFHFWLLLWIIVTPL).

It localises to the cell membrane. This is an uncharacterized protein from Bacillus subtilis (strain 168).